The chain runs to 472 residues: FAD-dependent monooxygenase dpmaE (472 aa).

A signal peptide spans methionine 1–leucine 24. FAD contacts are provided by glutamate 35, glycine 49, and arginine 108. Residues asparagine 128 and asparagine 179 are each glycosylated (N-linked (GlcNAc...) asparagine). FAD contacts are provided by aspartate 305 and alanine 318. N-linked (GlcNAc...) asparagine glycosylation is present at asparagine 369. The helical transmembrane segment at leucine 440 to isoleucine 460 threads the bilayer.

This sequence belongs to the paxM FAD-dependent monooxygenase family. The cofactor is FAD.

Its subcellular location is the membrane. It functions in the pathway secondary metabolite biosynthesis; terpenoid biosynthesis. Its function is as follows. FAD-dependent monooxygenase; part of the gene cluster that mediates the biosynthesis of the diterpenoid pyrones subglutinols A and B. The first step of the pathway is the synthesis of the alpha-pyrone moiety by the polyketide synthase dpmaA via condensation of one acetyl-CoA starter unit with 3 malonyl-CoA units and 2 methylations. The alpha-pyrone is then combined with geranylgeranyl pyrophosphate (GGPP) formed by the GGPP synthase dpmaD through the action of the prenyltransferase dpmaC to yield a linear alpha-pyrone diterpenoid. Subsequent steps in the diterpenoid pyrone biosynthetic pathway involve the decalin core formation, which is initiated by the epoxidation of the C10-C11 olefin by the FAD-dependent oxidoreductase dpmaE, and is followed by a cyclization cascade catalyzed by the terpene cyclase dpmaB. The dehydrogenase dpmaF is then involved in tetrahydrofuran (THF) ring formation at the C5 unit to complete the formation of subglutinols A and B. In Metarhizium anisopliae (Entomophthora anisopliae), this protein is FAD-dependent monooxygenase dpmaE.